Here is a 312-residue protein sequence, read N- to C-terminus: Dihydroorotate dehydrogenase B (NAD(+)), catalytic subunit (312 aa).

FMN contacts are provided by residues Ser21 and 45 to 46 (KA). Substrate contacts are provided by residues Lys45 and 69–73 (NAIGL). FMN-binding residues include Asn99 and Asn127. Asn127 is a substrate binding site. Cys130 functions as the Nucleophile in the catalytic mechanism. Positions 165 and 191 each coordinate FMN. Substrate is bound at residue 192–193 (NT). Residues Gly217, 243 to 244 (GG), and 265 to 266 (GT) each bind FMN.

It belongs to the dihydroorotate dehydrogenase family. Type 1 subfamily. Heterotetramer of 2 PyrK and 2 PyrD type B subunits. FMN serves as cofactor.

It is found in the cytoplasm. The enzyme catalyses (S)-dihydroorotate + NAD(+) = orotate + NADH + H(+). The protein operates within pyrimidine metabolism; UMP biosynthesis via de novo pathway; orotate from (S)-dihydroorotate (NAD(+) route): step 1/1. In terms of biological role, catalyzes the conversion of dihydroorotate to orotate with NAD(+) as electron acceptor. This is Dihydroorotate dehydrogenase B (NAD(+)), catalytic subunit (pyrD) from Anoxybacillus flavithermus (strain DSM 21510 / WK1).